The sequence spans 243 residues: MLIYLIPTAKEMSQNHTRFPATFPKKSYPILDVLANLSVKDLSKAYRISEDASQKEWLRIQALYNHTAPTYPAYKLFNGLMYRYLKRDSLSPKEEDYLKNHVYITSALYGIIPASFPIAEHRLDFQTKIKIGQQSLKHFWREDYNQFIDANQTYVSLLSSEFEDVFSTDQRQMWISTQFLEEKNGLLKSHSTISKKARGAFLTACIAKQCQSISDLKTLDFIGFSFSPELSTNHKFVYIKKEA.

This sequence belongs to the UPF0246 family.

The protein is UPF0246 protein SUB1767 of Streptococcus uberis (strain ATCC BAA-854 / 0140J).